Here is a 208-residue protein sequence, read N- to C-terminus: Fibroblast growth factor 6 (208 aa).

A signal peptide spans 1 to 37; it reads MALGQKLFITMSRGAGRLQGTLWALVFLGILVGMVVP. N-linked (GlcNAc...) asparagine glycosylation occurs at N45. Residues C90 and C157 are joined by a disulfide bond.

This sequence belongs to the heparin-binding growth factors family. As to quaternary structure, interacts with FGFR1, FGFR2 and FGFR4. Affinity between fibroblast growth factors (FGFs) and their receptors is increased by heparan sulfate glycosaminoglycans that function as coreceptors. Leukemia cell lines with platelet/ megakaryocytic differentiation potential.

The protein localises to the secreted. The protein resides in the extracellular space. Its function is as follows. Plays an important role in the regulation of cell proliferation, cell differentiation, angiogenesis and myogenesis, and is required for normal muscle regeneration. This chain is Fibroblast growth factor 6 (FGF6), found in Homo sapiens (Human).